The sequence spans 1072 residues: MPKRLDINTILVIGSGPIVIGQAAEFDYSGTQACQSLKEEGYKVILVNSNPATIMTDTATADKVYIEPLTLEFVSRIIRKERPDAILPTLGGQTGLNMAVELAKSGVLEECGVEILGTKLSAIEQAEDRDLFRTLMQELNEPTPPSEIIHNLDEAYGFVNEIGYPVIVRPAFTLGGTGGGICHNEEELIEIVTSGLKHSPVTQCLLEKSIAGCKEIEYEVMRDSNDNAIVVCNMENIDPVGVHTGDSIVVAPSQTLSDREYQMLRNTSLRIIRALGIEGGCNVQLALDPYSFQYYVIEVNPRVSRSSALASKATGYPIAKLAAKIAVGLTLDEIVNPVTQKTYACFEPALDYVVSKIPRWPFDKFESANRTLGTQMKATGEVMSIGRNLEESLLKAVRSLELGIYHLELDHLKELDKETMKKRIIKADDERLFIVAEAIRQGVTKEEINEWCEMDFFFLQKVENIVNMEREVKANVGNMEVLQTAKEMGFSDHYIAAAWNKTEREIYDMRKENNMTPVFKMVDTCAAEFESATPYYYSTYADENELIVTDRKSVVVLGSGPIRIGQGVEFDYATVHSVWAIKEAGYEAIIINNNPETVSTDFSISDKLYFEPLTIEDVMHIIDLEKPEGVIVQFGGQTAINLAAKLEEHGVKILGTSLEDLDRAEDRDKFEAALTKLGIPQPVGKTATTVEQAVAIAEEIGYPVLVRPSYVLGGRAMEIVYRQEELLHYMKNAVKVHADHPVLIDRYMVGKEIEVDAISDGENVFIPGIMEHIERAGVHSGDSIGVYPPQSLSEKLKEQIIEHTIALGKGLNIVGLLNIQFVVFKDQVYVIEVNPRASRTVPFLSKITGVPMANVATKVILGQDLVEQGYGTGYHPEEKEVYVKAPVFSFAKLRSVDTTLGPEMKSTGEVMGKDLTLEKALYKGLVASGINIPTHGSVIITVADKDKEEAMEIAKRFHEIGYNLLATAGTAQSLTEQNIPVQVVNKIDSEDYNLLDIIRQGKAQFVINTLTKGKQPARDGFRIRRESVENGVACLTSLDTTRAILRVLESMTFSAHSMKEITQTKRHEVVHA.

The tract at residues 1–401 (MPKRLDINTI…SLLKAVRSLE (401 aa)) is carboxyphosphate synthetic domain. Residues Arg-129, Arg-169, Gly-175, Gly-176, Lys-208, Ile-210, Glu-215, Gly-241, Val-242, His-243, Gln-284, and Glu-298 each coordinate ATP. Positions 133 to 327 (RTLMQELNEP…IAKLAAKIAV (195 aa)) constitute an ATP-grasp 1 domain. Positions 284, 298, and 300 each coordinate Mg(2+). Gln-284, Glu-298, and Asn-300 together coordinate Mn(2+). Positions 402–546 (LGIYHLELDH…YSTYADENEL (145 aa)) are oligomerization domain. The tract at residues 547 to 929 (IVTDRKSVVV…ALYKGLVASG (383 aa)) is carbamoyl phosphate synthetic domain. Residues 671–861 (EAALTKLGIP…MANVATKVIL (191 aa)) form the ATP-grasp 2 domain. Arg-707, Arg-746, Glu-752, Gly-777, Val-778, His-779, Ser-780, Gln-820, and Glu-832 together coordinate ATP. Mg(2+)-binding residues include Gln-820, Glu-832, and Asn-834. Mn(2+) contacts are provided by Gln-820, Glu-832, and Asn-834. In terms of domain architecture, MGS-like spans 930–1072 (INIPTHGSVI…QTKRHEVVHA (143 aa)). An allosteric domain region spans residues 930-1072 (INIPTHGSVI…QTKRHEVVHA (143 aa)).

This sequence belongs to the CarB family. In terms of assembly, composed of two chains; the small (or glutamine) chain promotes the hydrolysis of glutamine to ammonia, which is used by the large (or ammonia) chain to synthesize carbamoyl phosphate. Tetramer of heterodimers (alpha,beta)4. It depends on Mg(2+) as a cofactor. The cofactor is Mn(2+).

The enzyme catalyses hydrogencarbonate + L-glutamine + 2 ATP + H2O = carbamoyl phosphate + L-glutamate + 2 ADP + phosphate + 2 H(+). The catalysed reaction is hydrogencarbonate + NH4(+) + 2 ATP = carbamoyl phosphate + 2 ADP + phosphate + 2 H(+). The protein operates within amino-acid biosynthesis; L-arginine biosynthesis; carbamoyl phosphate from bicarbonate: step 1/1. It participates in pyrimidine metabolism; UMP biosynthesis via de novo pathway; (S)-dihydroorotate from bicarbonate: step 1/3. Large subunit of the glutamine-dependent carbamoyl phosphate synthetase (CPSase). CPSase catalyzes the formation of carbamoyl phosphate from the ammonia moiety of glutamine, carbonate, and phosphate donated by ATP, constituting the first step of 2 biosynthetic pathways, one leading to arginine and/or urea and the other to pyrimidine nucleotides. The large subunit (synthetase) binds the substrates ammonia (free or transferred from glutamine from the small subunit), hydrogencarbonate and ATP and carries out an ATP-coupled ligase reaction, activating hydrogencarbonate by forming carboxy phosphate which reacts with ammonia to form carbamoyl phosphate. This is Carbamoyl phosphate synthase large chain from Bacillus anthracis (strain A0248).